The sequence spans 486 residues: Histamine H1 receptor (486 aa).

Over 1–29 the chain is Extracellular; that stretch reads MSFANTSSTFEDKMCEGNRTAMASPQLLP. N-linked (GlcNAc...) asparagine glycans are attached at residues Asn-5 and Asn-18. The helical transmembrane segment at 30–50 threads the bilayer; that stretch reads LVVVLSSISLVTVGLNLLVLY. Topologically, residues 51–64 are cytoplasmic; the sequence is AVHSERKLHTVGNL. The chain crosses the membrane as a helical span at residues 65–89; that stretch reads YIVSLSVADLIVGAVVMPMNILYLI. The Extracellular portion of the chain corresponds to 90–97; the sequence is MTKWSLGR. A helical membrane pass occupies residues 98 to 123; it reads PLCLFWLSMDYVASTASIFSVFILCI. Residues Cys-100 and Cys-180 are joined by a disulfide bond. Residues Asp-107 and Thr-112 each contribute to the histamine site. The segment at 107–112 is important for agonist binding; the sequence is DYVAST. Residues 124–144 are Cytoplasmic-facing; it reads DRYRSVQQPLRYLRYRTKTRA. Phosphothreonine occurs at positions 140 and 142. A helical transmembrane segment spans residues 145–164; it reads SATILGAWFFSFLWVIPILG. The Extracellular segment spans residues 165-188; that stretch reads WHHFMPPAPELREDKCETDFYNVT. The chain crosses the membrane as a helical span at residues 189-211; sequence WFKIMTAIINFYLPTLLMLWFYV. Asn-198 serves as a coordination point for histamine. Topologically, residues 212 to 415 are cytoplasmic; that stretch reads KIYKAVRRHC…LNRERKAAKQ (204 aa). The residue at position 230 (Ser-230) is a Phosphoserine. A compositionally biased stretch (basic and acidic residues) spans 241 to 253; the sequence is SDDTKEGAKKPGR. Disordered stretches follow at residues 241-295 and 310-379; these read SDDT…GERE and VAEG…RSGS. Phosphoserine is present on residues Ser-342 and Ser-345. A compositionally biased stretch (polar residues) spans 347–365; sequence DQTLVDQQSFSRTTDSDTS. Residues Ser-379, Ser-381, Ser-395, and Ser-397 each carry the phosphoserine modification. The chain crosses the membrane as a helical span at residues 416 to 439; it reads LGFIMAAFILCWIPYFIFFMVIAF. Positions 423–427 are important for agonist binding; sequence FILCW. Tyr-430 lines the histamine pocket. Cys-440 and Cys-443 are oxidised to a cystine. The Extracellular portion of the chain corresponds to 440-445; sequence CKSCCS. Residues 446–468 traverse the membrane as a helical segment; that stretch reads EPMHMFTIWLGYINSTLNPLIYP. At 469–486 the chain is on the cytoplasmic side; the sequence is LCNENFKKTFKKILHIRS.

The protein belongs to the G-protein coupled receptor 1 family. Phosphorylation at sites in the second and third cytoplasmic loops independently contribute to agonist-induced receptor down-regulation.

It localises to the cell membrane. In terms of biological role, G-protein-coupled receptor for histamine, a biogenic amine that functions as an immune modulator and a neurotransmitter. Through the H1 receptor, histamine mediates the contraction of smooth muscles and increases capillary permeability due to contraction of terminal venules. Also mediates neurotransmission in the central nervous system and thereby regulates circadian rhythms, emotional and locomotor activities as well as cognitive functions. The protein is Histamine H1 receptor of Rattus norvegicus (Rat).